An 862-amino-acid polypeptide reads, in one-letter code: Rab GTPase-binding effector protein 1 (862 aa).

N-acetylalanine is present on Ala2. Residues 11–328 adopt a coiled-coil conformation; the sequence is DVSLQQRVAE…KDQEEDEQQR (318 aa). Lys282 carries the N6-acetyllysine modification. Disordered regions lie at residues 315–340 and 355–374; these read ELKK…KIDT and EESS…THGS. 3 positions are modified to phosphoserine: Ser374, Ser377, and Ser407. A Phosphothreonine modification is found at Thr408. Ser410 carries the post-translational modification Phosphoserine. A coiled-coil region spans residues 534-816; it reads DMCSNYEKQL…LQTELDVSEQ (283 aa).

Belongs to the rabaptin family. Heterodimer with RABGEF1. The heterodimer binds RAB4A and RAB5A that have been activated by GTP-binding. Interacts with TSC2. Interacts with GGA1 (via GAE domain), GGA2 (via GAE domain) and GGA3 (via GAE domain). Interacts with AP1G1 (via GAE domain). Interacts with AP1G2 (via GAE domain). Interacts with ECPAS. Interacts with KCNH1. Interacts with PKD1 (via C-terminal domain) and GGA1; the interactions recruit PKD1:PKD2 complex to GGA1 and ARL3 at trans-Golgi network. Interacts with KCNH1. Post-translationally, proteolytic cleavage by caspases in apoptotic cells causes loss of endosome fusion activity.

Its subcellular location is the cytoplasm. The protein localises to the early endosome. The protein resides in the recycling endosome. It is found in the cytoplasmic vesicle. In terms of biological role, rab effector protein acting as linker between gamma-adaptin, RAB4A and RAB5A. Involved in endocytic membrane fusion and membrane trafficking of recycling endosomes. Involved in KCNH1 channels trafficking to and from the cell membrane. Stimulates RABGEF1 mediated nucleotide exchange on RAB5A. Mediates the traffic of PKD1:PKD2 complex from the endoplasmic reticulum through the Golgi to the cilium. In Rattus norvegicus (Rat), this protein is Rab GTPase-binding effector protein 1 (Rabep1).